The chain runs to 290 residues: 4-hydroxybenzoate octaprenyltransferase (290 aa).

8 consecutive transmembrane segments (helical) span residues 23–43 (IGAL…TPGV), 46–66 (LWIL…GCVV), 99–119 (LFVV…TMTI), 141–161 (LPQV…FAAV), 163–183 (ESVP…AVAY), 213–233 (LIIG…GELN), 234–254 (GLGW…VYQQ), and 268–288 (AFMN…MSYW).

It belongs to the UbiA prenyltransferase family. Requires Mg(2+) as cofactor.

The protein localises to the cell inner membrane. The enzyme catalyses all-trans-octaprenyl diphosphate + 4-hydroxybenzoate = 4-hydroxy-3-(all-trans-octaprenyl)benzoate + diphosphate. Its pathway is cofactor biosynthesis; ubiquinone biosynthesis. In terms of biological role, catalyzes the prenylation of para-hydroxybenzoate (PHB) with an all-trans polyprenyl group. Mediates the second step in the final reaction sequence of ubiquinone-8 (UQ-8) biosynthesis, which is the condensation of the polyisoprenoid side chain with PHB, generating the first membrane-bound Q intermediate 3-octaprenyl-4-hydroxybenzoate. The protein is 4-hydroxybenzoate octaprenyltransferase of Escherichia coli (strain SE11).